A 1342-amino-acid chain; its full sequence is DNA-directed RNA polymerase subunit beta (1342 aa).

It belongs to the RNA polymerase beta chain family. In terms of assembly, the RNAP catalytic core consists of 2 alpha, 1 beta, 1 beta' and 1 omega subunit. When a sigma factor is associated with the core the holoenzyme is formed, which can initiate transcription.

It carries out the reaction RNA(n) + a ribonucleoside 5'-triphosphate = RNA(n+1) + diphosphate. DNA-dependent RNA polymerase catalyzes the transcription of DNA into RNA using the four ribonucleoside triphosphates as substrates. In Salmonella gallinarum (strain 287/91 / NCTC 13346), this protein is DNA-directed RNA polymerase subunit beta.